The following is a 665-amino-acid chain: F-box/LRR-repeat protein 3 (665 aa).

Positions 11–60 (KPFDLLSEELVFIILDLISPNPSDLKSFSLTCKSFYQLESKHRGSLKPLR) constitute an F-box domain. 21 LRR repeats span residues 61–81 (SDYL…DLTF), 82–108 (CPRV…DLSR), 109–134 (SGSF…DLSN), 135–159 (ATEM…KLGR), 160–185 (CKML…SLKW), 186–211 (CVGV…DLSY), 214–235 (ITGK…LLEG), 236–261 (CFGV…DASS), 262–287 (CQNL…DLSH), 288–312 (CSSV…IRLD), 313–338 (GCSV…SLSK), 339–364 (CVSV…DITC), 365–390 (CRKL…KMES), 391–416 (CSLV…DLTD), 419–440 (IDDE…KLGI), 441–466 (CLNI…DLYR), 467–492 (SVGI…NISY), 493–517 (CQDI…ESRG), 518–543 (CPNI…DLKK), 544–569 (CPSI…NVSD), and 594–619 (SSGL…KLHA).

The polypeptide is F-box/LRR-repeat protein 3 (FBL3) (Arabidopsis thaliana (Mouse-ear cress)).